Consider the following 293-residue polypeptide: 4-hydroxy-tetrahydrodipicolinate synthase (293 aa).

Residue T47 coordinates pyruvate. Y136 (proton donor/acceptor) is an active-site residue. K164 (schiff-base intermediate with substrate) is an active-site residue. I206 lines the pyruvate pocket.

The protein belongs to the DapA family. In terms of assembly, homotetramer; dimer of dimers.

The protein localises to the cytoplasm. It catalyses the reaction L-aspartate 4-semialdehyde + pyruvate = (2S,4S)-4-hydroxy-2,3,4,5-tetrahydrodipicolinate + H2O + H(+). Its pathway is amino-acid biosynthesis; L-lysine biosynthesis via DAP pathway; (S)-tetrahydrodipicolinate from L-aspartate: step 3/4. Catalyzes the condensation of (S)-aspartate-beta-semialdehyde [(S)-ASA] and pyruvate to 4-hydroxy-tetrahydrodipicolinate (HTPA). The sequence is that of 4-hydroxy-tetrahydrodipicolinate synthase from Listeria monocytogenes serotype 4a (strain HCC23).